Reading from the N-terminus, the 601-residue chain is Ubiquilin-4 (601 aa).

Positions 13–87 (IRVTVKTPKD…VHLVIKTPQK (75 aa)) constitute a Ubiquitin-like domain. Residues lysine 23 and lysine 62 each participate in a glycyl lysine isopeptide (Lys-Gly) (interchain with G-Cter in SUMO2) cross-link. Residues 87-155 (KAQDPAAATA…GAGEGSPSAT (69 aa)) are disordered. Positions 88 to 138 (AQDPAAATASSPSTPDPASAPSTTPASPATPAQPSTSGSASSDAGSGSRRS) are enriched in low complexity. Serine 98 and serine 144 each carry phosphoserine. Positions 139 to 149 (SGGGPSPGAGE) are enriched in gly residues. STI1 domains are found at residues 192 to 229 (NPEMLSQIMENPLVQDMMSNPDLMRHMIMANPQMQQLM) and 230 to 261 (ERNPEISHMLNNPELMRQTMELARNPAMMQEM). Threonine 287 bears the Phosphothreonine mark. Residues 301–366 (FGNNPFSSLA…QVHPTVSNPF (66 aa)) form a disordered region. The span at 307-318 (SSLAGNSDSSSS) shows a compositional bias: low complexity. At serine 318 the chain carries Phosphoserine; by ATM. Positions 329 to 340 (LPNPWSPSPPTS) are enriched in pro residues. A compositionally biased stretch (gly residues) spans 344–354 (GSGGEGTGGSG). The span at 357 to 366 (QVHPTVSNPF) shows a compositional bias: polar residues. STI1 domains lie at 393 to 440 (NPQL…QEQL) and 444 to 476 (LPVFLQQMQNPESLSILTNPRAMQALLQIQQGL). The segment at 490 to 533 (LGSFGISRTPAPSAGSNAGSTPEAPTSSPATPATSSPTGASSAQ) is disordered. Residues 507–533 (AGSTPEAPTSSPATPATSSPTGASSAQ) are compositionally biased toward low complexity. In terms of domain architecture, UBA spans 553–598 (QTPEVRFQQQLEQLNSMGFINREANLQALIATGGDINAAIERLLGS).

As to quaternary structure, homooligomer. Binds signal sequences of proteins that are targeted to the endoplasmic reticulum. Interacts (via UBA domain) with GJA1 (not ubiquitinated) and with ubiquitin; both compete for the same binding site. Interacts (via UBA domain) with ubiquitin and with polyubiquitin chains. Interacts (via ubiquitin-like domain) with PSMD2 and PSMD4, regulatory subunits of the 26S proteasome. Interacts with ATXN1/SCA1; interaction with ATXN1 inhibits polyubiquitination of UBQLN4 and interferes with PSMD4 binding. Interacts with HERPUD1. Interacts (via ubiquitin-like domain) with UBQLN1 (via UBA domain). Interacts with UBQLN2. Interacts (via STI1 1 and 2 domains) with MAP1LC3A/B/C. Interacts with BAG6. Interacts with MRE11 (when ubiquitinated); interaction with ubiquitinated MRE11 leads to MRE11 removal from chromatin. Interacts with DESI1/POST; leading to nuclear export. Interacts with BCL2A1 and BCL2L10. In terms of assembly, (Microbial infection) Interacts with Mumps virus protein SH. Phosphorylated by ATM at Ser-318 in response to DNA damage, leading to localization in the nucleus and recruitment to sites of DNA damage. In terms of processing, ubiquitinated; this does not lead to proteasomal degradation. May undergo both 'Lys-48'- and 'Lys-63'-linked polyubiquitination. As to expression, highly expressed in pancreas, kidney, skeletal muscle, heart and throughout the brain, and at lower levels in placenta, lung and liver.

The protein localises to the nucleus. Its subcellular location is the cytoplasm. It localises to the chromosome. The protein resides in the endoplasmic reticulum. It is found in the perinuclear region. The protein localises to the cytoplasmic vesicle. Its subcellular location is the autophagosome. Regulator of protein degradation that mediates the proteasomal targeting of misfolded, mislocalized or accumulated proteins. Acts by binding polyubiquitin chains of target proteins via its UBA domain and by interacting with subunits of the proteasome via its ubiquitin-like domain. Key regulator of DNA repair that represses homologous recombination repair: in response to DNA damage, recruited to sites of DNA damage following phosphorylation by ATM and acts by binding and removing ubiquitinated MRE11 from damaged chromatin, leading to MRE11 degradation by the proteasome. MRE11 degradation prevents homologous recombination repair, redirecting double-strand break repair toward non-homologous end joining (NHEJ). Specifically recognizes and binds mislocalized transmembrane-containing proteins and targets them to proteasomal degradation. Collaborates with DESI1/POST in the export of ubiquitinated proteins from the nucleus to the cytoplasm. Also plays a role in the regulation of the proteasomal degradation of non-ubiquitinated GJA1. Acts as an adapter protein that recruits UBQLN1 to the autophagy machinery. Mediates the association of UBQLN1 with autophagosomes and the autophagy-related protein LC3 (MAP1LC3A/B/C) and may assist in the maturation of autophagosomes to autolysosomes by mediating autophagosome-lysosome fusion. The sequence is that of Ubiquilin-4 from Homo sapiens (Human).